We begin with the raw amino-acid sequence, 282 residues long: Undecaprenyl-diphosphatase (282 aa).

6 helical membrane passes run 51–71 (TLVA…AAVI), 87–107 (MGWM…LFET), 115–135 (SLYW…LAEG), 191–211 (ATAA…AGLY), 229–249 (NILV…AFLL), and 259–279 (IFIA…ATGV).

Belongs to the UppP family.

The protein resides in the cell inner membrane. The enzyme catalyses di-trans,octa-cis-undecaprenyl diphosphate + H2O = di-trans,octa-cis-undecaprenyl phosphate + phosphate + H(+). Catalyzes the dephosphorylation of undecaprenyl diphosphate (UPP). Confers resistance to bacitracin. The chain is Undecaprenyl-diphosphatase from Pelodictyon phaeoclathratiforme (strain DSM 5477 / BU-1).